The chain runs to 267 residues: MSELQIVVLALIQGLTEFLPISSSAHLILPSQLLGWQDQGLAFDLILNIGTLSAVLIYFRMEVINMSRAWVGSLRGKGETQDSRLAWWILWSTIPAALIGFFGKSLVETYLRSGYVIAVTTTVFGLLLWWADANAKQVKTEYQTGLKGALFIGFAQVLALIPGTSRSGITITAGLMLGLTRNGAARFSFLMSIPIIAMASGYDLLKFILSDEYVDWGPLFLGAGISFVSAILCIHVFLILLNRVGMMPFVIYRLLLGGFLFYILSGT.

8 helical membrane passes run 1 to 21 (MSELQIVVLALIQGLTEFLPI), 39 to 59 (QGLAFDLILNIGTLSAVLIYF), 87 to 107 (WWILWSTIPAALIGFFGKSLV), 113 to 133 (SGYVIAVTTTVFGLLLWWADA), 144 to 164 (TGLKGALFIGFAQVLALIPGT), 189 to 209 (FLMSIPIIAMASGYDLLKFIL), 219 to 239 (LFLGAGISFVSAILCIHVFLI), and 244 to 264 (VGMMPFVIYRLLLGGFLFYIL).

It belongs to the UppP family.

It is found in the cell inner membrane. The enzyme catalyses di-trans,octa-cis-undecaprenyl diphosphate + H2O = di-trans,octa-cis-undecaprenyl phosphate + phosphate + H(+). Catalyzes the dephosphorylation of undecaprenyl diphosphate (UPP). Confers resistance to bacitracin. This Psychromonas ingrahamii (strain DSM 17664 / CCUG 51855 / 37) protein is Undecaprenyl-diphosphatase.